The primary structure comprises 112 residues: Nucleoid-associated protein CPR_0056 (112 aa).

A compositionally biased stretch (basic and acidic residues) spans 91–100 (ASEETSEKMG). The interval 91–112 (ASEETSEKMGKLTGGMGMPGLF) is disordered. A compositionally biased stretch (gly residues) spans 102-112 (LTGGMGMPGLF).

Belongs to the YbaB/EbfC family. As to quaternary structure, homodimer.

The protein localises to the cytoplasm. It localises to the nucleoid. Its function is as follows. Binds to DNA and alters its conformation. May be involved in regulation of gene expression, nucleoid organization and DNA protection. The chain is Nucleoid-associated protein CPR_0056 from Clostridium perfringens (strain SM101 / Type A).